Consider the following 245-residue polypeptide: Isopentenyl phosphate kinase (245 aa).

ATP is bound at residue 5 to 9; sequence KIGGS. A substrate-binding site is contributed by G45. G46 provides a ligand contact to ATP. Substrate-binding residues include H50 and G143. ATP is bound by residues D164, 169–174, G201, and K205; that span reads YSKDPK.

The protein belongs to the isopentenyl phosphate kinase family. Homodimer.

The catalysed reaction is isopentenyl phosphate + ATP = isopentenyl diphosphate + ADP. Functionally, catalyzes the formation of isopentenyl diphosphate (IPP), the building block of all isoprenoids. Has lower activity with isopentenyl thiolophosphate (ISP). Has low activity with dimethylallyl phosphate (DMAP), 1-butyl phosphate (BP) and 3-buten-1-yl phosphate (BEP). Has no significant activity with geranyl phosphate (in vitro). The chain is Isopentenyl phosphate kinase from Thermoplasma acidophilum (strain ATCC 25905 / DSM 1728 / JCM 9062 / NBRC 15155 / AMRC-C165).